Consider the following 224-residue polypeptide: Lipoprotein-releasing system ATP-binding protein LolD (224 aa).

The ABC transporter domain maps to 6–224 (VRLRELRRSF…VVRLHEGVLE (219 aa)). 42 to 49 (GPSGSGKS) serves as a coordination point for ATP.

Belongs to the ABC transporter superfamily. Lipoprotein translocase (TC 3.A.1.125) family. In terms of assembly, the complex is composed of two ATP-binding proteins (LolD) and two transmembrane proteins (LolC and LolE).

The protein resides in the cell inner membrane. Part of the ABC transporter complex LolCDE involved in the translocation of mature outer membrane-directed lipoproteins, from the inner membrane to the periplasmic chaperone, LolA. Responsible for the formation of the LolA-lipoprotein complex in an ATP-dependent manner. This Novosphingobium aromaticivorans (strain ATCC 700278 / DSM 12444 / CCUG 56034 / CIP 105152 / NBRC 16084 / F199) protein is Lipoprotein-releasing system ATP-binding protein LolD.